The chain runs to 213 residues: Histidine biosynthesis bifunctional protein HisIE (213 aa).

Residues 1 to 114 form a phosphoribosyl-AMP cyclohydrolase region; the sequence is MLTTEKYQGL…FHPALTDFSF (114 aa). The tract at residues 115–213 is phosphoribosyl-ATP pyrophosphohydrolase; that stretch reads LFQLENIISI…RVRSKLKKKH (99 aa).

This sequence in the N-terminal section; belongs to the PRA-CH family. In the C-terminal section; belongs to the PRA-PH family.

The protein resides in the cytoplasm. The enzyme catalyses 1-(5-phospho-beta-D-ribosyl)-ATP + H2O = 1-(5-phospho-beta-D-ribosyl)-5'-AMP + diphosphate + H(+). The catalysed reaction is 1-(5-phospho-beta-D-ribosyl)-5'-AMP + H2O = 1-(5-phospho-beta-D-ribosyl)-5-[(5-phospho-beta-D-ribosylamino)methylideneamino]imidazole-4-carboxamide. It participates in amino-acid biosynthesis; L-histidine biosynthesis; L-histidine from 5-phospho-alpha-D-ribose 1-diphosphate: step 2/9. The protein operates within amino-acid biosynthesis; L-histidine biosynthesis; L-histidine from 5-phospho-alpha-D-ribose 1-diphosphate: step 3/9. This is Histidine biosynthesis bifunctional protein HisIE from Blochmanniella floridana.